The primary structure comprises 435 residues: MAAPLKAVDGNADRTGDLQALMSDLAARARAAARVLALAPPEQKNRALEAMERAIRSNAAAILAANAEDVAEARASSNMTASFIDRLTLTPARVESMAEGIGIVRGIADPVGIVTESWQRPNGMTIERVRVPLGVVGVIFESRPNVAADAGVLCLKSGNAVILRGGSDSFRSCRAIHECLVQGLREAGLPEAAITLVPTRDRAAVGMMLSGLNGAIDVIVPRGGKSLVARVEQEARVPVFAHLEGVNHVYVDASADLAMAKSIVLNAKMRRTGVCGAAETLLVDRAAAATSLKPLVEMLIEAGCEVRGDDVVQKTDARVKPANDDDWDTEYLDAIIAAKVVDGVDGAIAHIQNHGSHHTDAIVSENEAAAKKFLSEVDSAIVLHNASTQFADGGEFGFGAEIGIATGRFHARGPVGAEQLTSFKYRVHGTGQTRP.

It belongs to the gamma-glutamyl phosphate reductase family.

The protein localises to the cytoplasm. The enzyme catalyses L-glutamate 5-semialdehyde + phosphate + NADP(+) = L-glutamyl 5-phosphate + NADPH + H(+). Its pathway is amino-acid biosynthesis; L-proline biosynthesis; L-glutamate 5-semialdehyde from L-glutamate: step 2/2. In terms of biological role, catalyzes the NADPH-dependent reduction of L-glutamate 5-phosphate into L-glutamate 5-semialdehyde and phosphate. The product spontaneously undergoes cyclization to form 1-pyrroline-5-carboxylate. The sequence is that of Gamma-glutamyl phosphate reductase from Bradyrhizobium diazoefficiens (strain JCM 10833 / BCRC 13528 / IAM 13628 / NBRC 14792 / USDA 110).